Here is a 1202-residue protein sequence, read N- to C-terminus: Protein jagged-2 (1202 aa).

At 1-1037 (GACCDGDGRT…ETVVMGGSST (1037 aa)) the chain is on the extracellular side. The N-linked (GlcNAc...) asparagine glycan is linked to Asn-107. Residues 150-194 (VRCDENYYSATCNKFCRPRNDFFGHYTCDQYGNKACMDGWMGKEC) form the DSL domain. 42 disulfides stabilise this stretch: Cys-152/Cys-161, Cys-165/Cys-177, Cys-185/Cys-194, Cys-199/Cys-210, Cys-203/Cys-216, Cys-218/Cys-227, Cys-230/Cys-241, Cys-236/Cys-247, Cys-249/Cys-258, Cys-265/Cys-277, Cys-271/Cys-287, Cys-289/Cys-298, Cys-305/Cys-316, Cys-310/Cys-325, Cys-327/Cys-336, Cys-343/Cys-354, Cys-348/Cys-363, Cys-365/Cys-374, Cys-381/Cys-392, Cys-386/Cys-401, Cys-403/Cys-412, Cys-419/Cys-429, Cys-423/Cys-438, Cys-440/Cys-449, Cys-456/Cys-467, Cys-461/Cys-476, Cys-478/Cys-487, Cys-495/Cys-506, Cys-500/Cys-515, Cys-517/Cys-526, Cys-544/Cys-567, Cys-561/Cys-577, Cys-579/Cys-588, Cys-595/Cys-606, Cys-600/Cys-615, Cys-617/Cys-626, Cys-633/Cys-644, Cys-638/Cys-653, Cys-655/Cys-664, Cys-671/Cys-682, Cys-676/Cys-691, and Cys-693/Cys-702. An EGF-like 1 domain is found at 195-228 (KEAVCKQGCNLLHGGCTVPGECRCSYGWQGKFCD). One can recognise an EGF-like 2; atypical domain in the interval 229–259 (ECVPYPGCVHGSCVEPWHCDCETNWGGLLCD). EGF-like domains are found at residues 261-299 (DLNYCGSHHPCVNGGTCINAEPDQYLCACPDGYLGKNCE) and 301-337 (AEHACASNPCANGGSCHEVLSGFECHCPSGWSGPTCA). The EGF-like 5; calcium-binding domain maps to 339–375 (DIDECASNPCAAGGTCVDQVDGFECICPEQWVGATCQ). An EGF-like 6; calcium-binding domain is found at 377 to 413 (DANECEGKPCLNAFSCKNLIGGYYCDCLPGWKGANCH). An EGF-like 7; calcium-binding domain is found at 415–450 (NINDCHGQCQHGGTCKDLVNGYQCVCPRGFGGRHCE). EGF-like domains are found at residues 452–488 (EYYKCASSPCRRGGICEDLVDGFRCHCPRGLSGPLCE) and 490–527 (DVDLWCEPNPCLNGARCYNLEDDYYCACPEDFGGKNCS). Asn-525 is a glycosylation site (N-linked (GlcNAc...) asparagine). Residues 529–589 (PRETCPGGAC…DSGFTGTYCH (61 aa)) enclose the EGF-like 10; atypical domain. An N-linked (GlcNAc...) asparagine glycan is attached at Asn-574. In terms of domain architecture, EGF-like 11; calcium-binding spans 591 to 627 (NIDDCMGQPCRNGGTCIDEVDSFACFCPSGWEGELCD). Residues 629 to 665 (NPNDCLPDPCHSRGRCYDLVNDFYCVCDDGWKDKTCH) enclose the EGF-like 12; calcium-binding domain. EGF-like domains lie at 667–703 (REFQCDAYTCSNGGTCYDSGDTFRCACPPGWKGSTCT) and 706–742 (KNSSCVPNPCVNGGTCVGSGDSFSCICRDGWEGRTCT). The N-linked (GlcNAc...) asparagine glycan is linked to Asn-707. 9 disulfides stabilise this stretch: Cys-710-Cys-721, Cys-715-Cys-730, Cys-732-Cys-741, Cys-748-Cys-759, Cys-753-Cys-768, Cys-770-Cys-779, Cys-786-Cys-797, Cys-791-Cys-806, and Cys-808-Cys-817. An EGF-like 15; calcium-binding domain is found at 744–780 (NTNDCNPLPCYNGGICVDGVNWFRCECAPGFAGPDCR). An EGF-like 16; calcium-binding domain is found at 782–818 (NIDECQSSPCAYGATCVDEINGYRCSCPPGRSGPRCQ). N-linked (GlcNAc...) asparagine glycosylation is present at Asn-1015. The chain crosses the membrane as a helical span at residues 1038 to 1058 (GLLVPVLCSVFSVLWLACMVI). Topologically, residues 1059–1202 (CVWWTRKRRK…TKDVRCAGRE (144 aa)) are cytoplasmic. Basic and acidic residues-rich tracts occupy residues 1070–1080 (RERSRLPRDES), 1147–1159 (LSRGDGRLSRSRE), and 1185–1202 (VDNRAVRSTKDVRCAGRE). The tract at residues 1070–1202 (RERSRLPRDE…TKDVRCAGRE (133 aa)) is disordered. Ser-1080 is modified (phosphoserine).

The protein resides in the membrane. In terms of biological role, putative Notch ligand involved in the mediation of Notch signaling. May have a role in neurogenesis in the peripheral nervous system, limb development and in the adult brain. The protein is Protein jagged-2 (Jag2) of Rattus norvegicus (Rat).